A 79-amino-acid polypeptide reads, in one-letter code: Neurotoxin BmK-M9 (79 aa).

A signal peptide spans 1-14; it reads MISFALLLMTGVES. The LCN-type CS-alpha/beta domain maps to 16–78; the sequence is RDAYIAKPEN…VPIRVPGKCH (63 aa). 4 cysteine pairs are disulfide-bonded: C26-C77, C30-C50, C36-C60, and C40-C62. A propeptide (removed by a carboxypeptidase) is located at residue R79.

It belongs to the long (4 C-C) scorpion toxin superfamily. Sodium channel inhibitor family. Alpha subfamily. Expressed by the venom gland.

The protein localises to the secreted. Functionally, binds to sodium channels (Nav) and inhibits the inactivation of the activated channels, thereby blocking neuronal transmission. This toxin is active against mammals. In Olivierus martensii (Manchurian scorpion), this protein is Neurotoxin BmK-M9.